Here is a 290-residue protein sequence, read N- to C-terminus: Transcription cofactor vestigial-like protein 4 (290 aa).

M1 is modified (N-acetylmethionine). Positions 17–30 are enriched in basic and acidic residues; the sequence is ADDEKREAALRGEP. Disordered stretches follow at residues 17–65, 85–106, 140–161, and 254–290; these read ADDE…PGDE, LNKT…SPIE, LDAS…QQNR, and AAKD…SVVS. The residue at position 52 (S52) is a Phosphoserine. The segment covering 92 to 105 has biased composition (basic and acidic residues); that stretch reads DCRRDPRERSRSPI. Residue S149 is modified to Phosphoserine. Over residues 150–161 the composition is skewed to polar residues; the sequence is PTLTPGERQQNR. T153 is subject to Phosphothreonine. The segment covering 272–290 has biased composition (low complexity); that stretch reads PASPSAHMVSHSHSPSVVS. A Phosphoserine modification is found at S274.

It belongs to the vestigial family. In terms of assembly, interacts with TEFs. Interacts with IRF2BP2.

The protein resides in the nucleus. Its function is as follows. May act as a specific coactivator for the mammalian TEFs. The chain is Transcription cofactor vestigial-like protein 4 from Homo sapiens (Human).